The sequence spans 420 residues: Gamma-glutamyl phosphate reductase (420 aa).

Belongs to the gamma-glutamyl phosphate reductase family.

The protein localises to the cytoplasm. It carries out the reaction L-glutamate 5-semialdehyde + phosphate + NADP(+) = L-glutamyl 5-phosphate + NADPH + H(+). Its pathway is amino-acid biosynthesis; L-proline biosynthesis; L-glutamate 5-semialdehyde from L-glutamate: step 2/2. Its function is as follows. Catalyzes the NADPH-dependent reduction of L-glutamate 5-phosphate into L-glutamate 5-semialdehyde and phosphate. The product spontaneously undergoes cyclization to form 1-pyrroline-5-carboxylate. The protein is Gamma-glutamyl phosphate reductase of Neisseria gonorrhoeae (strain ATCC 700825 / FA 1090).